Here is a 509-residue protein sequence, read N- to C-terminus: Putative ATP-dependent RNA helicase QP509L (509 aa).

A Helicase ATP-binding domain is found at Lys-110–Pro-262. Leu-123 to Thr-130 provides a ligand contact to ATP. Positions Asp-215–His-218 match the DEAH box motif.

Belongs to the DEAD box helicase family. DEAH subfamily.

It carries out the reaction ATP + H2O = ADP + phosphate + H(+). The sequence is that of Putative ATP-dependent RNA helicase QP509L from African swine fever virus (isolate Tick/Malawi/Lil 20-1/1983) (ASFV).